A 465-amino-acid chain; its full sequence is tRNA modification GTPase MnmE (465 aa).

3 residues coordinate (6S)-5-formyl-5,6,7,8-tetrahydrofolate: R21, E85, and K124. The TrmE-type G domain occupies G220 to H387. Residue N230 participates in K(+) binding. GTP-binding positions include N230–T235, S249–T255, and D274–G277. S234 contributes to the Mg(2+) binding site. Positions 249, 251, and 254 each coordinate K(+). A Mg(2+)-binding site is contributed by T255. K465 contributes to the (6S)-5-formyl-5,6,7,8-tetrahydrofolate binding site.

It belongs to the TRAFAC class TrmE-Era-EngA-EngB-Septin-like GTPase superfamily. TrmE GTPase family. In terms of assembly, homodimer. Heterotetramer of two MnmE and two MnmG subunits. It depends on K(+) as a cofactor.

It is found in the cytoplasm. In terms of biological role, exhibits a very high intrinsic GTPase hydrolysis rate. Involved in the addition of a carboxymethylaminomethyl (cmnm) group at the wobble position (U34) of certain tRNAs, forming tRNA-cmnm(5)s(2)U34. The chain is tRNA modification GTPase MnmE from Bacteroides fragilis (strain ATCC 25285 / DSM 2151 / CCUG 4856 / JCM 11019 / LMG 10263 / NCTC 9343 / Onslow / VPI 2553 / EN-2).